The sequence spans 103 residues: Small ribosomal subunit protein uS10 (103 aa).

This sequence belongs to the universal ribosomal protein uS10 family. Part of the 30S ribosomal subunit.

Its function is as follows. Involved in the binding of tRNA to the ribosomes. In Stenotrophomonas maltophilia (strain R551-3), this protein is Small ribosomal subunit protein uS10.